Here is a 133-residue protein sequence, read N- to C-terminus: Histone H2A.Z (133 aa).

Basic residues predominate over residues 1–11 (MSGKGKVHGGK). Residues 1 to 30 (MSGKGKVHGGKGKSSDSAKASTSHSARAGL) are disordered. Serine 2 carries the post-translational modification N-acetylserine. N6-acetyllysine occurs at positions 4, 11, and 13. The segment covering 15-26 (SDSAKASTSHSA) has biased composition (low complexity).

The protein belongs to the histone H2A family. As to quaternary structure, the nucleosome is a histone octamer containing two molecules each of H2A, H2B, H3 and H4 assembled in one H3-H4 heterotetramer and two H2A-H2B heterodimers. The octamer wraps approximately 147 bp of DNA. H2A or its variant H2A.Z forms a heterodimer with H2B. H2A.Z associates with the VPS72/SWC2 subunit of the SWR1 chromatin remodeling complex. Also interacts with RBP1/DNA-directed RNA polymerase II largest subunit. Acetylated once deposited into chromatin.

It localises to the nucleus. Its subcellular location is the chromosome. Functionally, variant histone H2A which can replace H2A in some nucleosomes. Nucleosomes wrap and compact DNA into chromatin, limiting DNA accessibility to the cellular machineries which require DNA as a template. Histones thereby play a central role in transcription regulation, DNA repair, DNA replication and chromosomal stability. DNA accessibility is regulated via a complex set of post-translational modifications of histones, also called histone code, and nucleosome remodeling. This variant is enriched at promoters, it may keep them in a repressed state until the appropriate activation signal is received. Near telomeres, it may counteract gene silencing caused by the spread of heterochromatin proteins. Required for the RNA polymerase II and SPT15/TBP recruitment to the target genes. Involved in chromosome stability. The sequence is that of Histone H2A.Z (HTZ1) from Meyerozyma guilliermondii (strain ATCC 6260 / CBS 566 / DSM 6381 / JCM 1539 / NBRC 10279 / NRRL Y-324) (Yeast).